The primary structure comprises 28 residues: Palustrin-1a (28 aa).

An intrachain disulfide couples C22 to C28.

In terms of tissue distribution, expressed by the skin glands.

It localises to the secreted. In terms of biological role, antimicrobial activity against Gram-negative bacterium E.coli. The chain is Palustrin-1a from Lithobates palustris (Pickerel frog).